The chain runs to 343 residues: Protein RecA (343 aa).

64–71 (GPESSGKT) lines the ATP pocket.

The protein belongs to the RecA family.

The protein localises to the cytoplasm. Its function is as follows. Can catalyze the hydrolysis of ATP in the presence of single-stranded DNA, the ATP-dependent uptake of single-stranded DNA by duplex DNA, and the ATP-dependent hybridization of homologous single-stranded DNAs. It interacts with LexA causing its activation and leading to its autocatalytic cleavage. The protein is Protein RecA of Bacillus cereus (strain ATCC 10987 / NRS 248).